Reading from the N-terminus, the 68-residue chain is ATP synthase F(0) complex subunit 8 (68 aa).

The chain crosses the membrane as a helical span at residues 8–24 (TWLITILSMILTLLIVF). K54 carries the N6-acetyllysine; alternate modification. K54 carries the post-translational modification N6-succinyllysine; alternate. N6-acetyllysine is present on K57.

Belongs to the ATPase protein 8 family. Component of the ATP synthase complex composed at least of ATP5F1A/subunit alpha, ATP5F1B/subunit beta, ATP5MC1/subunit c (homooctomer), MT-ATP6/subunit a, MT-ATP8/subunit 8, ATP5ME/subunit e, ATP5MF/subunit f, ATP5MG/subunit g, ATP5MK/subunit k, ATP5MJ/subunit j, ATP5F1C/subunit gamma, ATP5F1D/subunit delta, ATP5F1E/subunit epsilon, ATP5PF/subunit F6, ATP5PB/subunit b, ATP5PD/subunit d, ATP5PO/subunit OSCP. ATP synthase complex consists of a soluble F(1) head domain (subunits alpha(3) and beta(3)) - the catalytic core - and a membrane F(0) domain - the membrane proton channel (subunits c, a, 8, e, f, g, k and j). These two domains are linked by a central stalk (subunits gamma, delta, and epsilon) rotating inside the F1 region and a stationary peripheral stalk (subunits F6, b, d, and OSCP). Interacts with PRICKLE3.

It is found in the mitochondrion membrane. Its function is as follows. Subunit 8, of the mitochondrial membrane ATP synthase complex (F(1)F(0) ATP synthase or Complex V) that produces ATP from ADP in the presence of a proton gradient across the membrane which is generated by electron transport complexes of the respiratory chain. ATP synthase complex consist of a soluble F(1) head domain - the catalytic core - and a membrane F(1) domain - the membrane proton channel. These two domains are linked by a central stalk rotating inside the F(1) region and a stationary peripheral stalk. During catalysis, ATP synthesis in the catalytic domain of F(1) is coupled via a rotary mechanism of the central stalk subunits to proton translocation. In vivo, can only synthesize ATP although its ATP hydrolase activity can be activated artificially in vitro. Part of the complex F(0) domain. The chain is ATP synthase F(0) complex subunit 8 from Lemur catta (Ring-tailed lemur).